Reading from the N-terminus, the 186-residue chain is Large ribosomal subunit protein uL5 (186 aa).

It belongs to the universal ribosomal protein uL5 family. In terms of assembly, part of the 50S ribosomal subunit; part of the 5S rRNA/L5/L18/L25 subcomplex. Contacts the 5S rRNA and the P site tRNA. Forms a bridge to the 30S subunit in the 70S ribosome.

Functionally, this is one of the proteins that bind and probably mediate the attachment of the 5S RNA into the large ribosomal subunit, where it forms part of the central protuberance. In the 70S ribosome it contacts protein S13 of the 30S subunit (bridge B1b), connecting the 2 subunits; this bridge is implicated in subunit movement. Contacts the P site tRNA; the 5S rRNA and some of its associated proteins might help stabilize positioning of ribosome-bound tRNAs. The polypeptide is Large ribosomal subunit protein uL5 (Cereibacter sphaeroides (strain ATCC 17029 / ATH 2.4.9) (Rhodobacter sphaeroides)).